Consider the following 196-residue polypeptide: ATP-dependent Clp protease proteolytic subunit (196 aa).

The active-site Nucleophile is the S99. The active site involves H124.

It belongs to the peptidase S14 family. As to quaternary structure, fourteen ClpP subunits assemble into 2 heptameric rings which stack back to back to give a disk-like structure with a central cavity, resembling the structure of eukaryotic proteasomes.

It localises to the cytoplasm. The catalysed reaction is Hydrolysis of proteins to small peptides in the presence of ATP and magnesium. alpha-casein is the usual test substrate. In the absence of ATP, only oligopeptides shorter than five residues are hydrolyzed (such as succinyl-Leu-Tyr-|-NHMec, and Leu-Tyr-Leu-|-Tyr-Trp, in which cleavage of the -Tyr-|-Leu- and -Tyr-|-Trp bonds also occurs).. Functionally, cleaves peptides in various proteins in a process that requires ATP hydrolysis. Has a chymotrypsin-like activity. Plays a major role in the degradation of misfolded proteins. The protein is ATP-dependent Clp protease proteolytic subunit of Helicobacter hepaticus (strain ATCC 51449 / 3B1).